Here is a 295-residue protein sequence, read N- to C-terminus: Diaminopimelate epimerase (295 aa).

Substrate-binding residues include N13 and N69. The active-site Proton donor is C78. Substrate-binding positions include 79–80 (GN), N173, N212, and 230–231 (ER). The active-site Proton acceptor is the C239. 240 to 241 (GT) lines the substrate pocket.

Belongs to the diaminopimelate epimerase family. Homodimer.

It localises to the cytoplasm. The enzyme catalyses (2S,6S)-2,6-diaminopimelate = meso-2,6-diaminopimelate. It participates in amino-acid biosynthesis; L-lysine biosynthesis via DAP pathway; DL-2,6-diaminopimelate from LL-2,6-diaminopimelate: step 1/1. Its function is as follows. Catalyzes the stereoinversion of LL-2,6-diaminopimelate (L,L-DAP) to meso-diaminopimelate (meso-DAP), a precursor of L-lysine. In Methanococcus aeolicus (strain ATCC BAA-1280 / DSM 17508 / OCM 812 / Nankai-3), this protein is Diaminopimelate epimerase.